The sequence spans 698 residues: MTITKSQQYLTHFRNIGIAAHIDAGKTTTTERILFFTGRIRNLGETHEGASQMDWMEQERERGITITAAATTAHWTHTETGEDYTVNIIDTPGHVDFTIEVERSMRVLDGAVAVFDSSQGVEPQSETVWRQADRYGVPRVAFANKMDKTGASFDLVVNDIRERLGAIPAPIQYPMGAENDFKGVIDIVRMQAHTFTNDLGTEIQVGDVPAEYMDKVNEMRQQLIEAAAEVDEDLMMKFLEGEEPTQQELIAAIRKGTIDKQIFPVLCGSALKNKGVQLLLDAVVDYLPSPLEVPSIKGTHEDGETVTEFPADPEGKLAALAFKIMADPYVGRLTFVRIYSGTLTSGSYVYNASKDKRERVGRLLKMHANSREEVTELKAGELGAVIGLKDAGTGNTLIGDGDDRVLLESIDIPEPVIKLAIEPKTKADQEKMGVGLQKLAEEDPTFKVETDQESGQTTIAGMGELHLEILVDRLKREYKVEANVGAPQVAYRETITKQVEVDSKFARQSGGRGQYGHVKLRVEPLEPGAGFIFENAVVGGTVPKEYIGPAQKGVEEAMQSGPMLGFPVVDIKVVIYDGSYHEVDSSEMAFKIAGSMGLKEAVQKGSPAILEPVMRVEVTTPEEYMGDVIGDLNSRRGQIQGMEARGNAQIVKAFVPLSEMFGYATDMRSKTQGRASYSMFFDHYTQVPTNLAQQLMKK.

The 281-residue stretch at 11-291 (THFRNIGIAA…AVVDYLPSPL (281 aa)) folds into the tr-type G domain. Residues 20-27 (AHIDAGKT), 90-94 (DTPGH), and 144-147 (NKMD) contribute to the GTP site.

This sequence belongs to the TRAFAC class translation factor GTPase superfamily. Classic translation factor GTPase family. EF-G/EF-2 subfamily.

It localises to the cytoplasm. Functionally, catalyzes the GTP-dependent ribosomal translocation step during translation elongation. During this step, the ribosome changes from the pre-translocational (PRE) to the post-translocational (POST) state as the newly formed A-site-bound peptidyl-tRNA and P-site-bound deacylated tRNA move to the P and E sites, respectively. Catalyzes the coordinated movement of the two tRNA molecules, the mRNA and conformational changes in the ribosome. The protein is Elongation factor G of Deinococcus radiodurans (strain ATCC 13939 / DSM 20539 / JCM 16871 / CCUG 27074 / LMG 4051 / NBRC 15346 / NCIMB 9279 / VKM B-1422 / R1).